Consider the following 53-residue polypeptide: Lectin alpha chain (53 aa).

The protein belongs to the leguminous lectin family. In terms of assembly, tetramer of two alpha and two beta chains.

This is Lectin alpha chain from Lathyrus clymenum (Spanish vetchling).